We begin with the raw amino-acid sequence, 563 residues long: Arginine--tRNA ligase (563 aa).

Positions 120–130 match the 'HIGH' region motif; it reads PNIAKPFHIGH.

It belongs to the class-I aminoacyl-tRNA synthetase family. In terms of assembly, monomer.

The protein resides in the cytoplasm. It carries out the reaction tRNA(Arg) + L-arginine + ATP = L-arginyl-tRNA(Arg) + AMP + diphosphate. This chain is Arginine--tRNA ligase, found in Clostridium botulinum (strain ATCC 19397 / Type A).